A 1196-amino-acid chain; its full sequence is MTLYRSLWKKGCMLLLSLVLSLTAFIGSPSNTASAAVADDFQASVMGPLAKINDWGSFKKQLQTLKNNGVYAITTDVWWGYVESAGDNQFDWSYYKTYANAVKEAGLKWVPIISTHKCGGNVGDDCNIPLPSWLSSKGSADEMQFKDESGYANSEALSPLWSGTGKQYDELYASFAENFAGYKSIIPKIYLSGGPSGELRYPSYYPAAGWSYPGRGKFQAYTETAKNAFRTAMNDKYGSLDKINAAWGTKLTSLSQINPPTDGDGFYTNGGYNSAYGKDFLSWYQSVLEKHLGVIGAAAHKNFDSVFGVRIGAKISGLHWQMNNPAMPHGTEQAGGYYDYNRLIQKFKDADLDLTFTCLEMSDSGTAPNYSLPSTLVDTVSSIANAKGVRLNGENALPTGGSGFQKIEEKITKFGYHGFTLLRINNLVNNDGSPTGELSGFKQYIISKAKPDNNGGTGNKVTIYYKKGFNSPYIHYRPAGGSWTAAPGVKMQDAEISGYAKITVDIGSASQLEAAFNDGNNNWDSNNTKNYSFSTGTSTYTPGNSGNAGTITSGAPAGANPGDGGGTTNKVTVYYKKGFNSPYIHYRPAGGSWTAAPGVKMQDAEISGYAKITVDIGSASQLEAAFNDGNNNWDSNNTKNYLFSTGTSTYTPGSNGAAGTIRTGAPSGSVLSVVTSTYATDLNEVTGPIQTEKLSGVSLNVSTSTYAPNSNGVEVTAQTEAPSGAFTSMDLGTLSNPTSLNTDWSKQSIYFIMTDRFSNGDPSNDNYGGFNSNNSDQRKWHGGDFQGIINKLDYIKNMGFTAIWITPVTMQKSEYAYHGYHTYDFYAVDGHLGTMDKLQELVRKAHDKNIAVMVDVVVNHTGDFQPGNGFAKAPFDKADWYHHNGDITDGDYNSNNQWKIENGDVAGLDDLNHENPATANELKNWIKWLLNETGIDGLRLDTVKHVPKGFLKDFDQAANTFTMGEIFHGDPAYVGDYTRYLDAALDFPMYYTIKDVFGHDQSMRKIKDRYSDDRYYRDAQTNGVFIDNHDVKRFLNDASGKPGANYDKWPQLKAALGFTLTSRGIPIIYQGTEQGYSGGDDPANRENMNFNANHDLYQYIAKLNYVRNNHPALQNGSQREKWVDDSFYSFQRSKNGDEAIVFINNSWNSQTRTIGNFDNLSNGTRLTNQLSNDSVQINNGSITVTLAPKEVKVFTK.

The signal sequence occupies residues 1 to 35; that stretch reads MTLYRSLWKKGCMLLLSLVLSLTAFIGSPSNTASA. The beta-amylase stretch occupies residues 36 to 454; that stretch reads AVADDFQASV…IISKAKPDNN (419 aa). Residue Asp76 participates in substrate binding. Residues Glu83 and Asp87 each coordinate Ca(2+). Substrate is bound by residues His116 and Asp124. Residues Cys118 and Cys126 are joined by a disulfide bond. Glu170 serves as a coordination point for Ca(2+). Catalysis depends on Glu198, which acts as the Proton donor. The substrate site is built by Lys314, His319, and Thr357. Catalysis depends on Glu394, which acts as the Proton acceptor. Residues 395 to 396 and Arg423 each bind substrate; that span reads NA. Repeats lie at residues 455–558 and 565–668; these read GGTG…APAG and GGTT…APSG. Residues 544-553 are compositionally biased toward polar residues; it reads NSGNAGTITS. Residues 544-566 form a disordered region; that stretch reads NSGNAGTITSGAPAGANPGDGGG. An alpha-amylase region spans residues 669–1196; that stretch reads SVLSVVTSTY…APKEVKVFTK (528 aa).

It in the N-terminal section; belongs to the glycosyl hydrolase 14 family. The protein in the C-terminal section; belongs to the glycosyl hydrolase 13 family. The cofactor is Ca(2+).

Its subcellular location is the secreted. It carries out the reaction Hydrolysis of (1-&gt;4)-alpha-D-glucosidic linkages in polysaccharides so as to remove successive maltose units from the non-reducing ends of the chains.. The catalysed reaction is Endohydrolysis of (1-&gt;4)-alpha-D-glucosidic linkages in polysaccharides containing three or more (1-&gt;4)-alpha-linked D-glucose units.. In terms of biological role, the precursor protein is proteolytically cleaved to produce multiform beta-amylases and a 48 kDa alpha-amylase after secretion. The polypeptide is Beta/alpha-amylase (Paenibacillus polymyxa (Bacillus polymyxa)).